Reading from the N-terminus, the 209-residue chain is Ancillary SecYEG translocon subunit (209 aa).

Residues 1-23 lie on the Cytoplasmic side of the membrane; it reads MAAHLEEQQELDNFKYFWKTTGK. The chain crosses the membrane as a helical span at residues 24–42; that stretch reads WLFALLILAALGYLGYTVY. The Periplasmic segment spans residues 43 to 209; that stretch reads QNRAASQNQE…LLQMKLDSLK (167 aa). Residues 161-194 form a TPR repeat; it reads PLLMETKGDVYAAQEKSQEALKNYGQALEKMPQD.

Belongs to the YfgM family. As to quaternary structure, interacts with the SecYEG translocon. Forms a complex with PpiD.

Its subcellular location is the cell inner membrane. Functionally, may mediate protein transfer from the SecYEG translocon to the periplasmic chaperone network via its periplasmic C-terminal region. The chain is Ancillary SecYEG translocon subunit from Neisseria gonorrhoeae (strain ATCC 700825 / FA 1090).